A 198-amino-acid chain; its full sequence is Superoxide dismutase [Fe] (198 aa).

The Fe cation site is built by His-27, His-74, Asp-158, and His-162.

This sequence belongs to the iron/manganese superoxide dismutase family. As to quaternary structure, homodimer. It depends on Fe cation as a cofactor.

It is found in the cytoplasm. The enzyme catalyses 2 superoxide + 2 H(+) = H2O2 + O2. Functionally, destroys superoxide anion radicals which are normally produced within the cells and which are toxic to biological systems. The sequence is that of Superoxide dismutase [Fe] (SODB) from Plasmodium malariae.